The chain runs to 269 residues: Tryptophan synthase alpha chain (269 aa).

Catalysis depends on proton acceptor residues Glu-54 and Asp-65.

It belongs to the TrpA family. Tetramer of two alpha and two beta chains.

It carries out the reaction (1S,2R)-1-C-(indol-3-yl)glycerol 3-phosphate + L-serine = D-glyceraldehyde 3-phosphate + L-tryptophan + H2O. It participates in amino-acid biosynthesis; L-tryptophan biosynthesis; L-tryptophan from chorismate: step 5/5. In terms of biological role, the alpha subunit is responsible for the aldol cleavage of indoleglycerol phosphate to indole and glyceraldehyde 3-phosphate. The protein is Tryptophan synthase alpha chain of Synechococcus sp. (strain CC9902).